The primary structure comprises 884 residues: Probable leucine--tRNA ligase, cytoplasmic (884 aa).

A 'HIGH' region motif is present at residues Pro-40 to His-50. Residues Lys-566–Ser-570 carry the 'KMSKS' region motif. An ATP-binding site is contributed by Lys-569.

The protein belongs to the class-I aminoacyl-tRNA synthetase family.

It localises to the cytoplasm. It carries out the reaction tRNA(Leu) + L-leucine + ATP = L-leucyl-tRNA(Leu) + AMP + diphosphate. This chain is Probable leucine--tRNA ligase, cytoplasmic, found in Vairimorpha ceranae (strain BRL01) (Microsporidian parasite).